A 411-amino-acid polypeptide reads, in one-letter code: LL-diaminopimelate aminotransferase (411 aa).

Residues tyrosine 15 and glycine 42 each coordinate substrate. Pyridoxal 5'-phosphate contacts are provided by residues tyrosine 72, 108–109 (SK), tyrosine 132, asparagine 187, tyrosine 218, and 246–248 (SFS). Residues lysine 109, tyrosine 132, and asparagine 187 each coordinate substrate. Lysine 249 is modified (N6-(pyridoxal phosphate)lysine). Pyridoxal 5'-phosphate-binding residues include arginine 257 and asparagine 292. Residues asparagine 292 and arginine 388 each coordinate substrate.

Belongs to the class-I pyridoxal-phosphate-dependent aminotransferase family. LL-diaminopimelate aminotransferase subfamily. As to quaternary structure, homodimer. Requires pyridoxal 5'-phosphate as cofactor.

The catalysed reaction is (2S,6S)-2,6-diaminopimelate + 2-oxoglutarate = (S)-2,3,4,5-tetrahydrodipicolinate + L-glutamate + H2O + H(+). It functions in the pathway amino-acid biosynthesis; L-lysine biosynthesis via DAP pathway; LL-2,6-diaminopimelate from (S)-tetrahydrodipicolinate (aminotransferase route): step 1/1. Involved in the synthesis of meso-diaminopimelate (m-DAP or DL-DAP), required for both lysine and peptidoglycan biosynthesis. Catalyzes the direct conversion of tetrahydrodipicolinate to LL-diaminopimelate. This is LL-diaminopimelate aminotransferase from Geobacter sp. (strain M21).